Reading from the N-terminus, the 133-residue chain is Agouti-signaling protein (133 aa).

The N-terminal stretch at 1–22 is a signal peptide; it reads MDVIHLFLATLLVSLCFLTAYS. A compositionally biased stretch (basic and acidic residues) spans 26–36; that stretch reads PEEKPKDDRSL. Residues 26–83 are disordered; that stretch reads PEEKPKDDRSLRNNSSMNLLDSPSVSIMALNKKSKKISRKEAEKKKRSSKKKASMTKV. A compositionally biased stretch (polar residues) spans 37 to 50; it reads RNNSSMNLLDSPSV. Residues Asn-38 and Asn-39 are each glycosylated (N-linked (GlcNAc...) asparagine). Over residues 70–79 the composition is skewed to basic residues; that stretch reads KKRSSKKKAS. 5 disulfides stabilise this stretch: Cys-94–Cys-109, Cys-101–Cys-115, Cys-108–Cys-126, Cys-112–Cys-133, and Cys-117–Cys-124. In terms of domain architecture, Agouti spans 94–133; sequence CVATRDSCKPPAPACCDPCASCQCRFFRSACSCRVLTRTC.

Its subcellular location is the secreted. Functionally, involved in the regulation of melanogenesis. The binding of ASP to MC1R precludes alpha-MSH initiated signaling and thus blocks production of cAMP, leading to a down-regulation of eumelanogenesis (brown/black pigment) and thus increasing synthesis of pheomelanin (yellow/red pigment). In Equus caballus (Horse), this protein is Agouti-signaling protein (ASIP).